A 799-amino-acid polypeptide reads, in one-letter code: MVDQLTQHDPRRIGPFEVLGRLGAGGMGLVYLARSASGRRVAIKTVRTELAEDQLFRVRFTREVEAARAVSGFYTAAVVDADPRAAVPWLATAYVPAPSLEEIVNECGPMPAQAVRWLAAGVAEALQSIHGAGLVHRDLKPSNVLVVEDGPRVIDFGIASGVSNTRLTMTNVAVGTPAYMSPEQAKDSRSVTGASDVFSLGSMLVFAATGHPPFHGANPVETVFMLLREGPDLEGLPDELRPLIESCMQMEATGRPNPADLQAQLAPHLFGSGSDDSGTASAWLPERAVGLIEGRRNGRPAVKPATTAGGRGHGHGPSGARAPVHAPPLPPPPAHDPVVPAPPAHVPAVPAPVGAPDGGPVRLPGAAVPIGPGPRVADMRAAAVAAPPPESALAASWSRPRPGVNGADPAVPAPAPAPPEASPAGWRPWRFRMSNDVWGTPRVAEDLVYVTSFEVHALDVATGRRRFKTRDVAWSMAVADGRIHASDGPTLFALDAREGADLWRVQTDAWVYSLQADRGTVLTATRGGGVQAWEASAGQKLWEVTGAQTDFESPEAGAALHDGTAYVWQDARLRALDARTGDERWSYPIGDAASCGGVPVRLTQAPDGYVYVAAGTRVLALEVASGHVRWHFEAPAVFLAPPTFVPGPAVTGGGVYLADYLGTVYALDATDGRDRWRIATEARSSTDPVLVAAGHVHVGSGKGLYTLDAVTGTPKWRFQAGGDIVGAPAVAEGRIHFGSSDHLLYTLKADDGRLRWKLATGGEITGSPVVRDGIVYACSKDRCVYALDAEKGTGTARTT.

One can recognise a Protein kinase domain in the interval Phe16 to Gly271. Residues Leu22 to Val30 and Lys44 contribute to the ATP site. Phosphoserine; by autocatalysis is present on Ser71. Asp138 serves as the catalytic Proton acceptor. The residue at position 168 (Thr168) is a Phosphothreonine; by autocatalysis. 2 disordered regions span residues Arg295 to Pro343 and Leu393 to Trp426. 2 stretches are compositionally biased toward pro residues: residues His325–Pro343 and Val411–Ala421.

It belongs to the protein kinase superfamily. Ser/Thr protein kinase family. In terms of assembly, interacts (via the N-terminal kinase domain) with KbpA; the interaction prevents autophosphorylation of AfsK. Post-translationally, autophosphorylated mainly on threonine residues. Some phosphorylation on serine residues. Autophosphorylation on Thr-168 is the major site enhancing kinase activity towards AfsR, and is regulated though interaction with KbpA.

The catalysed reaction is L-seryl-[protein] + ATP = O-phospho-L-seryl-[protein] + ADP + H(+). It catalyses the reaction L-threonyl-[protein] + ATP = O-phospho-L-threonyl-[protein] + ADP + H(+). In terms of biological role, involved in the regulation of secondary metabolism by phosphorylating, on both Ser and Thr, the AfsR global regulatory protein involved in the control of secondary metabolism. The chain is Serine/threonine-protein kinase AfsK (afsK) from Streptomyces coelicolor (strain ATCC BAA-471 / A3(2) / M145).